The following is a 173-amino-acid chain: ATP synthase subunit b (173 aa).

A helical membrane pass occupies residues 12–32; sequence LDVNPGLVVWTLITFLVVVLV.

This sequence belongs to the ATPase B chain family. F-type ATPases have 2 components, F(1) - the catalytic core - and F(0) - the membrane proton channel. F(1) has five subunits: alpha(3), beta(3), gamma(1), delta(1), epsilon(1). F(0) has three main subunits: a(1), b(2) and c(10-14). The alpha and beta chains form an alternating ring which encloses part of the gamma chain. F(1) is attached to F(0) by a central stalk formed by the gamma and epsilon chains, while a peripheral stalk is formed by the delta and b chains.

The protein resides in the cell inner membrane. F(1)F(0) ATP synthase produces ATP from ADP in the presence of a proton or sodium gradient. F-type ATPases consist of two structural domains, F(1) containing the extramembraneous catalytic core and F(0) containing the membrane proton channel, linked together by a central stalk and a peripheral stalk. During catalysis, ATP synthesis in the catalytic domain of F(1) is coupled via a rotary mechanism of the central stalk subunits to proton translocation. Its function is as follows. Component of the F(0) channel, it forms part of the peripheral stalk, linking F(1) to F(0). The sequence is that of ATP synthase subunit b from Leptospira borgpetersenii serovar Hardjo-bovis (strain JB197).